The sequence spans 291 residues: Homeobox protein SIX2 (291 aa).

Positions 124–183 (GEETSYCFKEKSRSVLREWYAHNPYPSPREKRELAEATGLTTTQVSNWFKNRRQRDRAAE) form a DNA-binding region, homeobox. The tract at residues 168-279 (VSNWFKNRRQ…HHHGLQDSIL (112 aa)) is disordered. The segment covering 179 to 190 (DRAAEAKERENN) has biased composition (basic and acidic residues). Residues 224-233 (HSSSSPALLL) are compositionally biased toward low complexity. The segment covering 249 to 259 (PPGPSAVPVPV) has biased composition (pro residues).

This sequence belongs to the SIX/Sine oculis homeobox family. In terms of assembly, interacts with TCF7L2; in a canonical Wnt signaling independent manner; prevents transcription of differentiation genes in cap mesenchyme. Interacts with OSR1; form a strong repressor complex with TCF7L2, TLE2 and TLE3 to prevent the activation of Wnt/beta-catenin target genes in the cap mesenchyme. Interacts with HOXA11, EYA1 and EYA3. Strongly expressed in skeletal muscle. Expressed in Wilms' tumor and in the cap mesenchyme of fetal kidney (at protein level).

The protein resides in the nucleus. Transcription factor that plays an important role in the development of several organs, including kidney, skull and stomach. During kidney development, maintains cap mesenchyme multipotent nephron progenitor cells in an undifferentiated state by opposing the inductive signals emanating from the ureteric bud and cooperates with WNT9B to promote renewing progenitor cells proliferation. Acts through its interaction with TCF7L2 and OSR1 in a canonical Wnt signaling independent manner preventing transcription of differentiation genes in cap mesenchyme such as WNT4. Also acts independently of OSR1 to activate expression of many cap mesenchyme genes, including itself, GDNF and OSR1. During craniofacial development plays a role in growth and elongation of the cranial base through regulation of chondrocyte differentiation. During stomach organogenesis, controls pyloric sphincter formation and mucosal growth through regulation of a gene network including NKX2-5, BMPR1B, BMP4, SOX9 and GREM1. During branchial arch development, acts to mediate HOXA2 control over the insulin-like growth factor pathway. May also be involved in limb tendon and ligament development. Plays a role in cell proliferation and migration. This Homo sapiens (Human) protein is Homeobox protein SIX2 (SIX2).